Reading from the N-terminus, the 414-residue chain is Serine hydroxymethyltransferase (414 aa).

(6S)-5,6,7,8-tetrahydrofolate contacts are provided by residues L116 and 120-122 (GHL). N6-(pyridoxal phosphate)lysine is present on K224. (6S)-5,6,7,8-tetrahydrofolate is bound by residues E240 and 348 to 350 (SPF).

The protein belongs to the SHMT family. In terms of assembly, homodimer. It depends on pyridoxal 5'-phosphate as a cofactor.

Its subcellular location is the cytoplasm. The enzyme catalyses (6R)-5,10-methylene-5,6,7,8-tetrahydrofolate + glycine + H2O = (6S)-5,6,7,8-tetrahydrofolate + L-serine. Its pathway is one-carbon metabolism; tetrahydrofolate interconversion. It functions in the pathway amino-acid biosynthesis; glycine biosynthesis; glycine from L-serine: step 1/1. Catalyzes the reversible interconversion of serine and glycine with tetrahydrofolate (THF) serving as the one-carbon carrier. This reaction serves as the major source of one-carbon groups required for the biosynthesis of purines, thymidylate, methionine, and other important biomolecules. Also exhibits THF-independent aldolase activity toward beta-hydroxyamino acids, producing glycine and aldehydes, via a retro-aldol mechanism. This chain is Serine hydroxymethyltransferase, found in Campylobacter jejuni subsp. jejuni serotype O:23/36 (strain 81-176).